The following is a 106-amino-acid chain: uncharacterized protein (106 aa).

Residues 1–46 (MPQGGTPCRRARRAVRPERPTSPEGVFCVGGGAPGGPPDTTNTVSA) form a disordered region.

This is an uncharacterized protein from Gracula (BFDV).